Consider the following 360-residue polypeptide: Phospho-N-acetylmuramoyl-pentapeptide-transferase (360 aa).

The next 10 membrane-spanning stretches (helical) occupy residues Tyr21 to Gly41, Thr73 to Leu93, Thr94 to Val114, Trp132 to Gly152, Val168 to Ser188, Gly199 to Thr219, Leu239 to Tyr259, Val263 to Leu283, Phe288 to Val308, and Val338 to Lys358.

The protein belongs to the glycosyltransferase 4 family. MraY subfamily. The cofactor is Mg(2+).

The protein resides in the cell inner membrane. It carries out the reaction UDP-N-acetyl-alpha-D-muramoyl-L-alanyl-gamma-D-glutamyl-meso-2,6-diaminopimeloyl-D-alanyl-D-alanine + di-trans,octa-cis-undecaprenyl phosphate = di-trans,octa-cis-undecaprenyl diphospho-N-acetyl-alpha-D-muramoyl-L-alanyl-D-glutamyl-meso-2,6-diaminopimeloyl-D-alanyl-D-alanine + UMP. The protein operates within cell wall biogenesis; peptidoglycan biosynthesis. In terms of biological role, catalyzes the initial step of the lipid cycle reactions in the biosynthesis of the cell wall peptidoglycan: transfers peptidoglycan precursor phospho-MurNAc-pentapeptide from UDP-MurNAc-pentapeptide onto the lipid carrier undecaprenyl phosphate, yielding undecaprenyl-pyrophosphoryl-MurNAc-pentapeptide, known as lipid I. This is Phospho-N-acetylmuramoyl-pentapeptide-transferase from Vibrio cholerae serotype O1 (strain M66-2).